Consider the following 52-residue polypeptide: ATP synthase protein 8 (52 aa).

The helical transmembrane segment at Phe-10–Phe-30 threads the bilayer.

Belongs to the ATPase protein 8 family. F-type ATPases have 2 components, CF(1) - the catalytic core - and CF(0) - the membrane proton channel.

It localises to the mitochondrion membrane. Its function is as follows. Mitochondrial membrane ATP synthase (F(1)F(0) ATP synthase or Complex V) produces ATP from ADP in the presence of a proton gradient across the membrane which is generated by electron transport complexes of the respiratory chain. F-type ATPases consist of two structural domains, F(1) - containing the extramembraneous catalytic core and F(0) - containing the membrane proton channel, linked together by a central stalk and a peripheral stalk. During catalysis, ATP synthesis in the catalytic domain of F(1) is coupled via a rotary mechanism of the central stalk subunits to proton translocation. Part of the complex F(0) domain. Minor subunit located with subunit a in the membrane. The chain is ATP synthase protein 8 (MT-ATP8) from Rhipicephalus sanguineus (Brown dog tick).